A 415-amino-acid polypeptide reads, in one-letter code: Putative FNIP repeat-containing protein L415 (415 aa).

The FNIP repeat unit spans residues 148–185 (FIKKGAIPDSVTHLYFGSDYLSKDIIPKNVVYLRFGDF).

This Acanthamoeba polyphaga mimivirus (APMV) protein is Putative FNIP repeat-containing protein L415.